Consider the following 371-residue polypeptide: UDP-N-acetylglucosamine--N-acetylmuramyl-(pentapeptide) pyrophosphoryl-undecaprenol N-acetylglucosamine transferase (371 aa).

Residues 15–17 (TGG), asparagine 126, arginine 172, serine 199, isoleucine 256, 275–280 (ALTVSE), and glutamine 301 each bind UDP-N-acetyl-alpha-D-glucosamine.

Belongs to the glycosyltransferase 28 family. MurG subfamily.

It localises to the cell inner membrane. The catalysed reaction is di-trans,octa-cis-undecaprenyl diphospho-N-acetyl-alpha-D-muramoyl-L-alanyl-D-glutamyl-meso-2,6-diaminopimeloyl-D-alanyl-D-alanine + UDP-N-acetyl-alpha-D-glucosamine = di-trans,octa-cis-undecaprenyl diphospho-[N-acetyl-alpha-D-glucosaminyl-(1-&gt;4)]-N-acetyl-alpha-D-muramoyl-L-alanyl-D-glutamyl-meso-2,6-diaminopimeloyl-D-alanyl-D-alanine + UDP + H(+). It participates in cell wall biogenesis; peptidoglycan biosynthesis. Cell wall formation. Catalyzes the transfer of a GlcNAc subunit on undecaprenyl-pyrophosphoryl-MurNAc-pentapeptide (lipid intermediate I) to form undecaprenyl-pyrophosphoryl-MurNAc-(pentapeptide)GlcNAc (lipid intermediate II). In Francisella philomiragia subsp. philomiragia (strain ATCC 25017 / CCUG 19701 / FSC 153 / O#319-036), this protein is UDP-N-acetylglucosamine--N-acetylmuramyl-(pentapeptide) pyrophosphoryl-undecaprenol N-acetylglucosamine transferase.